The primary structure comprises 532 residues: Spore coat protein SP85 (532 aa).

Residues Met1–Ala19 form the signal peptide. N-linked (GlcNAc...) asparagine glycosylation occurs at Asn47. Residues Thr197–Val265 are disordered. A compositionally biased stretch (pro residues) spans Thr201 to Pro263. The 23-residue stretch at Asp267–Val289 folds into the Follistatin-like 1 domain. A disordered region spans residues Thr297–Pro320. Follistatin-like domains lie at Ser335 to Val359, Thr400 to Val423, and Thr430 to Val452.

As to quaternary structure, binds to cotE. Post-translationally, O-glycosylated.

Its subcellular location is the spore wall. Functionally, required for incorporation of cotE into the spore coat and for the formation of the outer layer. Has a cross-bridging function between cellulose and other coat proteins. The polypeptide is Spore coat protein SP85 (pspB) (Dictyostelium discoideum (Social amoeba)).